The sequence spans 236 residues: Glycoprotein U23 (236 aa).

The first 17 residues, 1 to 17 (MLFLSFLLVCLCEEVRM), serve as a signal peptide directing secretion. 3 N-linked (GlcNAc...) asparagine; by host glycosylation sites follow: asparagine 67, asparagine 80, and asparagine 103. A helical transmembrane segment spans residues 184 to 204 (LVIWIGGISFIGAFVILIVIL).

The protein resides in the membrane. The polypeptide is Glycoprotein U23 (U23) (Human herpesvirus 6A (strain Uganda-1102) (HHV-6 variant A)).